The primary structure comprises 339 residues: Glycerol-3-phosphate dehydrogenase [NAD(P)+] (339 aa).

3 residues coordinate NADPH: Ser11, Trp12, and Lys109. Sn-glycerol 3-phosphate is bound by residues Lys109, Gly140, and Ser142. An NADPH-binding site is contributed by Ala144. Sn-glycerol 3-phosphate-binding residues include Lys195, Asp249, Ser259, Arg260, and Asn261. The active-site Proton acceptor is the Lys195. Residue Arg260 coordinates NADPH. Residues Val284 and Glu286 each coordinate NADPH.

The protein belongs to the NAD-dependent glycerol-3-phosphate dehydrogenase family.

The protein resides in the cytoplasm. The enzyme catalyses sn-glycerol 3-phosphate + NAD(+) = dihydroxyacetone phosphate + NADH + H(+). The catalysed reaction is sn-glycerol 3-phosphate + NADP(+) = dihydroxyacetone phosphate + NADPH + H(+). Its pathway is membrane lipid metabolism; glycerophospholipid metabolism. Functionally, catalyzes the reduction of the glycolytic intermediate dihydroxyacetone phosphate (DHAP) to sn-glycerol 3-phosphate (G3P), the key precursor for phospholipid synthesis. The chain is Glycerol-3-phosphate dehydrogenase [NAD(P)+] from Lactobacillus helveticus (strain DPC 4571).